The sequence spans 360 residues: tRNA (guanine(9)-N1)-methyltransferase (360 aa).

The segment at 1–77 is disordered; that stretch reads MENQDTEQSQ…RRKERIKEAE (77 aa). Composition is skewed to basic and acidic residues over residues 8–24 and 33–55; these read QSQK…DFKR and MTKR…DEYK. Basic residues predominate over residues 56 to 67; it reads QKKREKKKAARE. Residues 68 to 77 are compositionally biased toward basic and acidic residues; that stretch reads RRKERIKEAE. Residues 94-293 form the SAM-dependent MTase TRM10-type domain; the sequence is RAKVAPQEQI…EVLPPRKVKG (200 aa). Residues 199–200, glycine 219, 223–227, cysteine 231, leucine 245, and 257–259 each bind S-adenosyl-L-methionine; these read LT, DKNRY, and QVL. Aspartate 223 acts as the Proton acceptor in catalysis. The disordered stretch occupies residues 291–360; it reads VKGKLTHGSD…SDEPSKGADH (70 aa). Over residues 297–306 the composition is skewed to basic and acidic residues; it reads HGSDPEKSIE. Low complexity predominate over residues 307-324; it reads PSEVSEQPVSSEQSEQPV. Positions 328 to 343 are enriched in polar residues; sequence QPVSSEQPVLSEQPVL.

This sequence belongs to the class IV-like SAM-binding methyltransferase superfamily. TRM10 family. Monomer.

The protein resides in the cytoplasm. It is found in the nucleus. It carries out the reaction guanosine(9) in tRNA + S-adenosyl-L-methionine = N(1)-methylguanosine(9) in tRNA + S-adenosyl-L-homocysteine + H(+). Its function is as follows. S-adenosyl-L-methionine-dependent guanine N(1)-methyltransferase that catalyzes the formation of N(1)-methylguanine at position 9 (m1G9) in cytoplasmic tRNA. This is tRNA (guanine(9)-N1)-methyltransferase from Debaryomyces hansenii (strain ATCC 36239 / CBS 767 / BCRC 21394 / JCM 1990 / NBRC 0083 / IGC 2968) (Yeast).